We begin with the raw amino-acid sequence, 157 residues long: 2-C-methyl-D-erythritol 2,4-cyclodiphosphate synthase (157 aa).

A divalent metal cation contacts are provided by Asp-8 and His-10. 4-CDP-2-C-methyl-D-erythritol 2-phosphate-binding positions include 8–10 (DVH) and 34–35 (HS). A divalent metal cation is bound at residue His-42. 4-CDP-2-C-methyl-D-erythritol 2-phosphate-binding positions include 56 to 58 (DIG), 61 to 65 (FPDTD), 100 to 106 (AQKPKMA), 132 to 135 (TTEE), and Phe-139.

It belongs to the IspF family. In terms of assembly, homotrimer. It depends on a divalent metal cation as a cofactor.

It catalyses the reaction 4-CDP-2-C-methyl-D-erythritol 2-phosphate = 2-C-methyl-D-erythritol 2,4-cyclic diphosphate + CMP. Its pathway is isoprenoid biosynthesis; isopentenyl diphosphate biosynthesis via DXP pathway; isopentenyl diphosphate from 1-deoxy-D-xylulose 5-phosphate: step 4/6. Involved in the biosynthesis of isopentenyl diphosphate (IPP) and dimethylallyl diphosphate (DMAPP), two major building blocks of isoprenoid compounds. Catalyzes the conversion of 4-diphosphocytidyl-2-C-methyl-D-erythritol 2-phosphate (CDP-ME2P) to 2-C-methyl-D-erythritol 2,4-cyclodiphosphate (ME-CPP) with a corresponding release of cytidine 5-monophosphate (CMP). The protein is 2-C-methyl-D-erythritol 2,4-cyclodiphosphate synthase of Clostridium novyi (strain NT).